Consider the following 133-residue polypeptide: Small ribosomal subunit protein uS8 (133 aa).

This sequence belongs to the universal ribosomal protein uS8 family. Part of the 30S ribosomal subunit. Contacts proteins S5 and S12.

In terms of biological role, one of the primary rRNA binding proteins, it binds directly to 16S rRNA central domain where it helps coordinate assembly of the platform of the 30S subunit. The polypeptide is Small ribosomal subunit protein uS8 (Parasynechococcus marenigrum (strain WH8102)).